The sequence spans 158 residues: MAEEKSFPMTADGKAKLEQELEDLRLVRRPEVINRIKIARSYGDLSENSEYESAKDEQAFVEGRISQIETMLQYAVIIDNEDVAADEVSMGREITFQELPDEEPESYTIVGESESDPLSGKISNESPMAKGLLGHKVGDTVEIEIPNGSMKVKILSVK.

A coiled-coil region spans residues 49 to 69; it reads SEYESAKDEQAFVEGRISQIE. The interval 102–125 is disordered; sequence EEPESYTIVGESESDPLSGKISNE.

This sequence belongs to the GreA/GreB family.

Its function is as follows. Necessary for efficient RNA polymerase transcription elongation past template-encoded arresting sites. The arresting sites in DNA have the property of trapping a certain fraction of elongating RNA polymerases that pass through, resulting in locked ternary complexes. Cleavage of the nascent transcript by cleavage factors such as GreA or GreB allows the resumption of elongation from the new 3'terminus. GreA releases sequences of 2 to 3 nucleotides. The sequence is that of Transcription elongation factor GreA from Limosilactobacillus fermentum (strain NBRC 3956 / LMG 18251) (Lactobacillus fermentum).